A 211-amino-acid polypeptide reads, in one-letter code: MGQKSNPIGLRLKIINTWDSLWYANKDYTTKLHEDFLLRKFIKKAFYHASISKVVIARKVDVIMVNVYSAKPGVIIGKKGADIDKVKQQIVKMINNNIELNIIEVKKPELKAVLIAENIAQQLEKRISFRRAMKRSVQSCLKIGAKGIKVSCAGRLGGAEIARTEWYKEGSVPLHTFRANIDYGFSEAKTIYGIIGVKVWVYLGDTKSSNE.

The region spanning 38 to 106 (LRKFIKKAFY…NIELNIIEVK (69 aa)) is the KH type-2 domain.

Belongs to the universal ribosomal protein uS3 family. As to quaternary structure, part of the 30S ribosomal subunit. Forms a tight complex with proteins S10 and S14.

In terms of biological role, binds the lower part of the 30S subunit head. Binds mRNA in the 70S ribosome, positioning it for translation. The chain is Small ribosomal subunit protein uS3 from Ehrlichia chaffeensis (strain ATCC CRL-10679 / Arkansas).